The primary structure comprises 222 residues: Putative N-acetylmannosamine-6-phosphate 2-epimerase (222 aa).

Belongs to the NanE family.

It catalyses the reaction an N-acyl-D-glucosamine 6-phosphate = an N-acyl-D-mannosamine 6-phosphate. The protein operates within amino-sugar metabolism; N-acetylneuraminate degradation; D-fructose 6-phosphate from N-acetylneuraminate: step 3/5. Its function is as follows. Converts N-acetylmannosamine-6-phosphate (ManNAc-6-P) to N-acetylglucosamine-6-phosphate (GlcNAc-6-P). The protein is Putative N-acetylmannosamine-6-phosphate 2-epimerase of Staphylococcus aureus (strain Mu3 / ATCC 700698).